A 263-amino-acid chain; its full sequence is Aminoglycoside 3'-phosphotransferase (263 aa).

Asp189 functions as the Proton acceptor in the catalytic mechanism.

Belongs to the aminoglycoside phosphotransferase family.

The catalysed reaction is kanamycin A + ATP = kanamycin 3'-phosphate + ADP + H(+). In terms of biological role, resistance to kanamycin and structurally-related aminoglycosides, including amikacin. The protein is Aminoglycoside 3'-phosphotransferase (aphA) of Staphylococcus aureus.